The primary structure comprises 294 residues: MSTHTEEQHGEHQYLSQVQHILNYGSFKNDRTGTGTLSIFGTQSRFSLENEFPLLTTKRVFWRGVVEELLWFIRGSTDSKELSAAGVHIWDANGSRSFLDKLGFYDRDEGDLGPVYGFQWRHFGAEYKGVGRDYKGEGVDQLKQLIDTIKTNPTDRRMLMCAWNVSDIPKMVLPPCHVLSQFYVCDGKLSCQLYQRSADMGLGVPFNIASYSLLTCMIAHVTNLVPGEFIHTIGDAHIYVDHIDALKMQLTRTPRPFPTLRFARNVSCIDDFKADDIILENYNPHPIIKMHMAV.

Residues arginine 31 and 156 to 157 (RR) contribute to the dUMP site. Residue cysteine 176 is the Nucleophile of the active site. DUMP-binding positions include 196-199 (RSAD), asparagine 207, and 237-239 (HIY). Aspartate 199 lines the (6R)-5,10-methylene-5,6,7,8-tetrahydrofolate pocket. Alanine 293 is a (6R)-5,10-methylene-5,6,7,8-tetrahydrofolate binding site.

Belongs to the thymidylate synthase family. Homodimer.

The catalysed reaction is dUMP + (6R)-5,10-methylene-5,6,7,8-tetrahydrofolate = 7,8-dihydrofolate + dTMP. The protein operates within pyrimidine metabolism; dTTP biosynthesis. The protein is Thymidylate synthase (70) of Saimiri sciureus (Common squirrel monkey).